The following is a 394-amino-acid chain: 1-deoxy-D-xylulose 5-phosphate reductoisomerase (394 aa).

NADPH contacts are provided by Thr10, Gly11, Ser12, Ile13, Gly38, Arg39, Asn40, and Asn123. Lys124 contacts 1-deoxy-D-xylulose 5-phosphate. Glu125 provides a ligand contact to NADPH. Asp149 serves as a coordination point for Mn(2+). Positions 150, 151, 175, and 198 each coordinate 1-deoxy-D-xylulose 5-phosphate. Mn(2+) is bound at residue Glu151. Gly204 is an NADPH binding site. Residues Ser211, Asn216, Lys217, and Glu220 each coordinate 1-deoxy-D-xylulose 5-phosphate. Glu220 lines the Mn(2+) pocket.

Belongs to the DXR family. Requires Mg(2+) as cofactor. Mn(2+) is required as a cofactor.

The catalysed reaction is 2-C-methyl-D-erythritol 4-phosphate + NADP(+) = 1-deoxy-D-xylulose 5-phosphate + NADPH + H(+). It participates in isoprenoid biosynthesis; isopentenyl diphosphate biosynthesis via DXP pathway; isopentenyl diphosphate from 1-deoxy-D-xylulose 5-phosphate: step 1/6. Functionally, catalyzes the NADPH-dependent rearrangement and reduction of 1-deoxy-D-xylulose-5-phosphate (DXP) to 2-C-methyl-D-erythritol 4-phosphate (MEP). This Cereibacter sphaeroides (strain KD131 / KCTC 12085) (Rhodobacter sphaeroides) protein is 1-deoxy-D-xylulose 5-phosphate reductoisomerase.